An 874-amino-acid polypeptide reads, in one-letter code: MQCPNQNHMLVNRAMVVAALDSFEDARRIISGVLDLSRLTNTSVKGQHTNDTNYFSRYSNFFSQMPAIILNQLKCCIKAQVDDAVKMVLQKAKKVEVSKPVEKMLTFTTLNTYLGYPESTGCVMEYTEEQSGPIAAKLLITLLSSTLNAMVRPKSDPNISQNKIPRHYYQLKVHVGAQKKVNLTAIEVIRGCQHECSVVYCEFVRYSAYFAGLYDDQVAAILLYAVAAHNVQGFGARFCVLWALMCVRIAGFADDINIYIKHRGMSGLLPQLVEMKCLLGRGVNEIDVETEARRRLDVGSLSMQRLDENELRAAVRLIYSEELRRPVTYPLICDFWSSRWLWAANGSHSRALEHAHPELATRKEGQAYRKAVMEQWQHNPMDRWDGTVYVTPSAKLEHGKTRLLLACDTLSYMWFEYALRPVERIWENSNVILDPGSMGNCGIATRINGWRNGMPGQSFFAVDYDDFNSQHTLMSQKIVFEELFHHIGYNASWVKTLVDSFDSMELWIKGKCAGIMAGTLMSGHRATSFINSVLNRAYIICAGGHVPTSMHVGDDILMSCTLGHADNLIANLNRKGVRLNASKQVFSKTSGEFLRVAHREHTSHGYLARVISSAVSGNWVSDHTLNQQEALMNAIVCCRGILNRSLPGEKNPVVRVISRSVSKRTKIEEKTIRLLLSGRACLKGGVVYGEQTNYIQVYRINCRVERSEEKLPPYRHATEDYLNNHLADIEVMAVRQYGSDIADIMAQASWKKSMSTEGAEDVSRLSLQRDKTLPCLHCITEKETSLLPVRYGLFSSYPILMMLKDRIPIKEALKLAVTIGYRPQPNSDLELDLWGESNNSCAIEGVLPYNEATSLAQKLPCGGVVIQVIHNVYV.

This sequence belongs to the totiviridae RNA-directed RNA polymerase family.

It carries out the reaction RNA(n) + a ribonucleoside 5'-triphosphate = RNA(n+1) + diphosphate. Functionally, RNA-dependent RNA polymerase which replicates the viral genome. Catalyzes the transcription of fully conservative plus-strand genomic RNAs that are extruded from the virion into the cytoplasm where they function as mRNAs for translation of viral proteins and also as substrates for encapsidation to form new virions. Once encapsidated, the positive strand is converted to dsRNA by the RNA-directed RNA polymerase. Displays ssRNA-binding activity. The chain is Probable RNA-directed RNA polymerase (ORF3) from Leishmania major (LRV-1-1).